The primary structure comprises 699 residues: Kinesin-like protein KIF3A (699 aa).

The region spanning 14 to 345 (NVKVVVRCRP…LRYANRAKNI (332 aa)) is the Kinesin motor domain. Residue 100-107 (GQTGTGKT) participates in ATP binding. Positions 355–590 (PKDALLRQFQ…LSRELRLQML (236 aa)) form a coiled coil. Disordered stretches follow at residues 372 to 421 (KKLE…KMIE) and 663 to 699 (SLMK…SLLQ). Positions 376–400 (EGEEISGSDISGSEEDDDEEGEVGE) are enriched in acidic residues. Residues 672–687 (TSKGKARPKTGRRKRS) are compositionally biased toward basic residues. Serine 687 is modified (phosphoserine). Residues 697–699 (LLQ) are globular.

It belongs to the TRAFAC class myosin-kinesin ATPase superfamily. Kinesin family. Kinesin II subfamily. Heterodimer of KIF3A and KIF3B. Interacts with CIMAP3. Interacts with CLN3. Interacts with DCTN1. Interacts with FLCN. Interacts with AP3B1.

It localises to the cytoplasm. The protein resides in the cytoskeleton. The protein localises to the cell projection. Its subcellular location is the cilium. It is found in the microtubule organizing center. It localises to the centrosome. The protein resides in the centriole. In terms of biological role, microtubule-based anterograde translocator for membranous organelles. Plus end-directed microtubule sliding activity in vitro. Plays a role in primary cilia formation. Plays a role in centriole cohesion and subdistal appendage organization and function. Regulates the formation of the subdistal appendage via recruitment of DCTN1 to the centriole. Also required for ciliary basal feet formation and microtubule anchoring to mother centriole. This Homo sapiens (Human) protein is Kinesin-like protein KIF3A (KIF3A).